The chain runs to 57 residues: Large ribosomal subunit protein bL32 (57 aa).

A disordered region spans residues 1 to 23 (MAVPKKKTSKSKRDKRRATWRHK).

This sequence belongs to the bacterial ribosomal protein bL32 family.

This is Large ribosomal subunit protein bL32 from Trichormus variabilis (strain ATCC 29413 / PCC 7937) (Anabaena variabilis).